Here is a 143-residue protein sequence, read N- to C-terminus: uncharacterized protein (143 aa).

The chain crosses the membrane as a helical span at residues 65–85; sequence LVWMLVGTIVLSLDIIFPALV.

Its subcellular location is the membrane. This is an uncharacterized protein from Saccharomyces cerevisiae (strain ATCC 204508 / S288c) (Baker's yeast).